A 263-amino-acid chain; its full sequence is Hydroxyethylthiazole kinase (263 aa).

Met39 contributes to the substrate binding site. Residues Lys115 and Thr160 each contribute to the ATP site. Residue Gly187 participates in substrate binding.

The protein belongs to the Thz kinase family. Mg(2+) is required as a cofactor.

The enzyme catalyses 5-(2-hydroxyethyl)-4-methylthiazole + ATP = 4-methyl-5-(2-phosphooxyethyl)-thiazole + ADP + H(+). It participates in cofactor biosynthesis; thiamine diphosphate biosynthesis; 4-methyl-5-(2-phosphoethyl)-thiazole from 5-(2-hydroxyethyl)-4-methylthiazole: step 1/1. Its function is as follows. Catalyzes the phosphorylation of the hydroxyl group of 4-methyl-5-beta-hydroxyethylthiazole (THZ). In Staphylococcus aureus (strain COL), this protein is Hydroxyethylthiazole kinase.